A 1071-amino-acid polypeptide reads, in one-letter code: SLIT-ROBO Rho GTPase-activating protein 2 (1071 aa).

One can recognise an F-BAR domain in the interval 22–325 (KEIRAQLTEQ…AVENLDATSD (304 aa)). Residues 181–203 (LKEAEKQEEKQIGKSVKQEDRQT) show a composition bias toward basic and acidic residues. Positions 181 to 211 (LKEAEKQEEKQIGKSVKQEDRQTPRSPDSTA) are disordered. A Phosphoserine modification is found at Ser206. Positions 363–401 (QSELVQRRQQLQSRLSTLKIENEEVKKTMEATLQTIQDI) form a coiled coil. Phosphoserine is present on residues Ser427, Ser500, Ser691, Ser695, and Ser724. One can recognise a Rho-GAP domain in the interval 489–679 (ARRSSTVRKQ…TIIIQHENIF (191 aa)). The tract at residues 703 to 726 (THGETISAEDSTQDVTAEHHTSDD) is disordered. The 60-residue stretch at 728–787 (CEPIEAIAKFDYVGRTARELSFKKGASLLLYQRASDDWWEGRHNGIDGLIPHQYIVVQDT) folds into the SH3 domain. 2 disordered regions span residues 794–820 (RSSP…GASC) and 835–936 (NKQR…NHRP). Ser795 is subject to Phosphoserine. Polar residues-rich tracts occupy residues 857-867 (LGSSLTDSSSP), 874-885 (RPSSQPIMSQNL), and 897-907 (GHGSLNSISRH). Residue Ser916 is modified to Phosphoserine. The segment covering 919–933 (IRKTATAGRSKSFNN) has biased composition (polar residues). At Arg927 the chain carries Symmetric dimethylarginine; by PRMT5. Position 930 is a phosphoserine (Ser930). A coiled-coil region spans residues 940–968 (EVIAQDIEATMNSALNELQELERQSSAKH). The disordered stretch occupies residues 983 to 1012 (SPVVAPTSEPSSPLHTQLLKDPEPAFQRSA). Phosphoserine occurs at positions 990, 994, 1013, and 1027. The interval 1029 to 1071 (KMAAPVKPPATRPKPTVFPKTNATSPGVNSSASPQSTDKSCTV) is disordered. The segment covering 1047–1071 (PKTNATSPGVNSSASPQSTDKSCTV) has biased composition (polar residues).

In terms of assembly, homodimer. Forms a heterooligomer with SRGAP1 and SRGAP3 through its F-BAR domain. Interacts (via SH3 domain) with GPHN. Interacts (via SH3 domain) with FMNL1 (activated by RAC1); regulates the actin filament severing activity of FMNL1 and actin dynamics. Interacts (via SH3 domain) with FMNL3. Interacts with RAC1; specifically stimulates RAC1 GTPase activity. Interacts (via F-BAR domain) with HOMER1. Interacts with ROBO1 and ROBO2. Interacts with FASLG. Interacts with PRMT5. In terms of processing, methylation at Arg-927 is required for the stimulation of cell migration, dimerization and localization at the plasma membrane protrusions.

Its subcellular location is the cell membrane. The protein localises to the cell projection. It is found in the dendritic spine. The protein resides in the postsynaptic density. It localises to the postsynaptic cell membrane. Its subcellular location is the lamellipodium. The protein localises to the cytoplasmic vesicle. It is found in the phagosome. The protein resides in the nucleus. It localises to the cytoplasm. Its subcellular location is the cytosol. Postsynaptic RAC1 GTPase activating protein (GAP) that plays a key role in neuronal morphogenesis and migration mainly during development of the cerebral cortex. Regulates excitatory and inhibitory synapse maturation and density in cortical pyramidal neurons. SRGAP2/SRGAP2A limits excitatory and inhibitory synapse density through its RAC1-specific GTPase activating activity, while it promotes maturation of both excitatory and inhibitory synapses through its ability to bind to the postsynaptic scaffolding protein HOMER1 at excitatory synapses, and the postsynaptic protein GPHN at inhibitory synapses. Mechanistically, acts by binding and deforming membranes, thereby regulating actin dynamics to regulate cell migration and differentiation. Promotes cell repulsion and contact inhibition of locomotion: localizes to protrusions with curved edges and controls the duration of RAC1 activity in contact protrusions. In non-neuronal cells, may also play a role in cell migration by regulating the formation of lamellipodia and filopodia. This Rattus norvegicus (Rat) protein is SLIT-ROBO Rho GTPase-activating protein 2.